A 422-amino-acid polypeptide reads, in one-letter code: MENTVLNLDSDVIHACEAIFQPIRLVYTHAQTPDVSGVSMLEKIQQILPQIAKNAESAEQLRRVPDENIKLLKEIGLHRAFQPKVYGGLEMSLPDFANCIVTLAGACAGTAWAFSLLCTHSHQIAMFSKQLQDEIWLKDPDATASSSIAPFGKVEEVEGGIILNGDYGWSSGCDHAEYAIVGFNRFDADGNKIYSFGVIPRSDYEIVDNWYAQAIKSSGSKMLKLVNVFIPEYRISKAKDMMEGKSAGFGLYPDSKIFYTPYRPYFASGFSAVSLGIAERMIEAFKEKQRNRVRAYTGANVGLATPALMRIAESTHQVAAARALLEKTWEDHRIHGLNHQYPNKETLAFWRTNQAYAVKMCIEAVDRLMAAAGATSFMDNSELQRLFRDAHMTGAHAYTDYDVCAQILGRELMGMEPDPTMV.

An FMN-binding site is contributed by W112. The substrate site is built by H120 and S146. FMN-binding positions include 146–148 and 169–171; these read SSI and WSS. A substrate-binding site is contributed by 263-266; that stretch reads RPYF. FMN-binding positions include R292, Y296, 374 to 375, and 396 to 397; these read AT and HA. Y296 serves as a coordination point for substrate.

Belongs to the HpaH/HsaA monooxygenase family. Homotetramer. The p-hydroxyphenylacetate 3-hydroxylase (HpaH) is composed of an oxygenase component C2 and a reductase component C1.

The catalysed reaction is 4-hydroxyphenylacetate + FMNH2 + O2 = 3,4-dihydroxyphenylacetate + FMN + H2O + H(+). It catalyses the reaction 4-hydroxyphenylacetate + FADH2 + O2 = 3,4-dihydroxyphenylacetate + FAD + H2O + H(+). It participates in aromatic compound metabolism; 4-hydroxyphenylacetate degradation; pyruvate and succinate semialdehyde from 4-hydroxyphenylacetate: step 1/7. With respect to regulation, inhibited by flavin concentrations greater than 15 uM. Also inhibited by excess p-hydroxyphenylacetate (HPA). In terms of biological role, oxygenase component of a two-component system that utilizes reduced FMN (FMNH2) supplied by the reductase component to catalyze the hydroxylation of 4-hydroxyphenylacetic acid, leading to the production of 3,4-dihydroxyphenylacetate (3,4-DHPA). Also utilizes other reduced flavins such as FADH2 and reduced riboflavin to a lesser extent. Only the compounds with a hydroxyl group in the para (p-) position can be hydroxylated. May also oxidize phenol to catechol, and hydroxylate other phenol derivatives. This Acinetobacter baumannii protein is p-hydroxyphenylacetate 3-hydroxylase, oxygenase component.